Consider the following 258-residue polypeptide: Tryptophan synthase alpha chain (258 aa).

Active-site proton acceptor residues include Glu47 and Asp58.

This sequence belongs to the TrpA family. Tetramer of two alpha and two beta chains.

It catalyses the reaction (1S,2R)-1-C-(indol-3-yl)glycerol 3-phosphate + L-serine = D-glyceraldehyde 3-phosphate + L-tryptophan + H2O. It participates in amino-acid biosynthesis; L-tryptophan biosynthesis; L-tryptophan from chorismate: step 5/5. Functionally, the alpha subunit is responsible for the aldol cleavage of indoleglycerol phosphate to indole and glyceraldehyde 3-phosphate. This chain is Tryptophan synthase alpha chain, found in Bacillus anthracis (strain CDC 684 / NRRL 3495).